The chain runs to 199 residues: ATP-dependent Clp protease proteolytic subunit 2 (199 aa).

Residue S98 is the Nucleophile of the active site. H123 is a catalytic residue.

It belongs to the peptidase S14 family. In terms of assembly, fourteen ClpP subunits assemble into 2 heptameric rings which stack back to back to give a disk-like structure with a central cavity, resembling the structure of eukaryotic proteasomes.

The protein localises to the cytoplasm. The catalysed reaction is Hydrolysis of proteins to small peptides in the presence of ATP and magnesium. alpha-casein is the usual test substrate. In the absence of ATP, only oligopeptides shorter than five residues are hydrolyzed (such as succinyl-Leu-Tyr-|-NHMec, and Leu-Tyr-Leu-|-Tyr-Trp, in which cleavage of the -Tyr-|-Leu- and -Tyr-|-Trp bonds also occurs).. Cleaves peptides in various proteins in a process that requires ATP hydrolysis. Has a chymotrypsin-like activity. Plays a major role in the degradation of misfolded proteins. The chain is ATP-dependent Clp protease proteolytic subunit 2 from Corynebacterium diphtheriae (strain ATCC 700971 / NCTC 13129 / Biotype gravis).